The sequence spans 20 residues: Thylakoid lumenal 22 kDa protein (20 aa).

Its subcellular location is the plastid. The protein localises to the chloroplast thylakoid lumen. This chain is Thylakoid lumenal 22 kDa protein, found in Spinacia oleracea (Spinach).